A 349-amino-acid chain; its full sequence is sn-glycerol-3-phosphate import ATP-binding protein UgpC (349 aa).

The region spanning 4–235 (ITLKDVHKTY…PATAFVATFI (232 aa)) is the ABC transporter domain. 37-44 (GPSGCGKS) serves as a coordination point for ATP.

This sequence belongs to the ABC transporter superfamily. sn-glycerol-3-phosphate importer (TC 3.A.1.1.3) family. In terms of assembly, the complex is composed of two ATP-binding proteins (UgpC), two transmembrane proteins (UgpA and UgpE) and a solute-binding protein (UgpB).

The protein localises to the cell inner membrane. The enzyme catalyses sn-glycerol 3-phosphate(out) + ATP + H2O = sn-glycerol 3-phosphate(in) + ADP + phosphate + H(+). Its function is as follows. Part of the ABC transporter complex UgpBAEC involved in sn-glycerol-3-phosphate (G3P) import. Responsible for energy coupling to the transport system. This Rhizobium meliloti (strain 1021) (Ensifer meliloti) protein is sn-glycerol-3-phosphate import ATP-binding protein UgpC.